Consider the following 379-residue polypeptide: Cytochrome b (379 aa).

A run of 8 helical transmembrane segments spans residues phenylalanine 33–methionine 53, tryptophan 77–valine 98, tryptophan 113–leucine 133, phenylalanine 178–leucine 198, isoleucine 226–serine 246, leucine 288–histidine 308, leucine 320–glycine 340, and phenylalanine 347–proline 367. Heme b contacts are provided by histidine 83 and histidine 97. The heme b site is built by histidine 182 and histidine 196.

It belongs to the cytochrome b family. In terms of assembly, the cytochrome bc1 complex contains 11 subunits: 3 respiratory subunits (MT-CYB, CYC1 and UQCRFS1), 2 core proteins (UQCRC1 and UQCRC2) and 6 low-molecular weight proteins (UQCRH/QCR6, UQCRB/QCR7, UQCRQ/QCR8, UQCR10/QCR9, UQCR11/QCR10 and a cleavage product of UQCRFS1). This cytochrome bc1 complex then forms a dimer. Heme b is required as a cofactor.

It localises to the mitochondrion inner membrane. Component of the ubiquinol-cytochrome c reductase complex (complex III or cytochrome b-c1 complex) that is part of the mitochondrial respiratory chain. The b-c1 complex mediates electron transfer from ubiquinol to cytochrome c. Contributes to the generation of a proton gradient across the mitochondrial membrane that is then used for ATP synthesis. The polypeptide is Cytochrome b (MT-CYB) (Sciurus niger (Eastern fox squirrel)).